The primary structure comprises 466 residues: ATP synthase subunit beta (466 aa).

Residue 148 to 155 participates in ATP binding; the sequence is GGAGVGKT.

This sequence belongs to the ATPase alpha/beta chains family. As to quaternary structure, F-type ATPases have 2 components, CF(1) - the catalytic core - and CF(0) - the membrane proton channel. CF(1) has five subunits: alpha(3), beta(3), gamma(1), delta(1), epsilon(1). CF(0) has three main subunits: a(1), b(2) and c(9-12). The alpha and beta chains form an alternating ring which encloses part of the gamma chain. CF(1) is attached to CF(0) by a central stalk formed by the gamma and epsilon chains, while a peripheral stalk is formed by the delta and b chains.

It is found in the cell inner membrane. It catalyses the reaction ATP + H2O + 4 H(+)(in) = ADP + phosphate + 5 H(+)(out). Produces ATP from ADP in the presence of a proton gradient across the membrane. The catalytic sites are hosted primarily by the beta subunits. The chain is ATP synthase subunit beta from Xylella fastidiosa (strain M12).